A 72-amino-acid chain; its full sequence is Probable neurotoxin pcD-993 (72 aa).

The first 19 residues, 1 to 19 (MNYLVMISFALLLVIGVES), serve as a signal peptide directing secretion. The LCN-type CS-alpha/beta domain occupies 21-72 (RDGYFVEPDNCVVHCMPSSEMCDRGCKHNGATSGSCKAFSKGGNACWCKGLR). Intrachain disulfides connect Cys-35–Cys-56, Cys-42–Cys-66, and Cys-46–Cys-68. Position 72 (Arg-72) is a propeptide, removed by a carboxypeptidase.

The protein belongs to the long (3 C-C) scorpion toxin superfamily. Expressed by the venom gland.

Its subcellular location is the secreted. The chain is Probable neurotoxin pcD-993 from Androctonus australis (Sahara scorpion).